The primary structure comprises 131 residues: Ribosome-binding factor A (131 aa).

This sequence belongs to the RbfA family. In terms of assembly, monomer. Binds 30S ribosomal subunits, but not 50S ribosomal subunits or 70S ribosomes.

The protein localises to the cytoplasm. One of several proteins that assist in the late maturation steps of the functional core of the 30S ribosomal subunit. Associates with free 30S ribosomal subunits (but not with 30S subunits that are part of 70S ribosomes or polysomes). Required for efficient processing of 16S rRNA. May interact with the 5'-terminal helix region of 16S rRNA. The polypeptide is Ribosome-binding factor A (Christiangramia forsetii (strain DSM 17595 / CGMCC 1.15422 / KT0803) (Gramella forsetii)).